Reading from the N-terminus, the 388-residue chain is Dual-specificity RNA methyltransferase RlmN (388 aa).

The Proton acceptor role is filled by glutamate 109. A Radical SAM core domain is found at glutamate 115–aspartate 354. Cysteine 122 and cysteine 359 form a disulfide bridge. Residues cysteine 129, cysteine 133, and cysteine 136 each contribute to the [4Fe-4S] cluster site. Residues glycine 183–glutamate 184, serine 215, serine 237–histidine 239, and asparagine 316 contribute to the S-adenosyl-L-methionine site. Residue cysteine 359 is the S-methylcysteine intermediate of the active site.

It belongs to the radical SAM superfamily. RlmN family. Requires [4Fe-4S] cluster as cofactor.

The protein localises to the cytoplasm. The enzyme catalyses adenosine(2503) in 23S rRNA + 2 reduced [2Fe-2S]-[ferredoxin] + 2 S-adenosyl-L-methionine = 2-methyladenosine(2503) in 23S rRNA + 5'-deoxyadenosine + L-methionine + 2 oxidized [2Fe-2S]-[ferredoxin] + S-adenosyl-L-homocysteine. The catalysed reaction is adenosine(37) in tRNA + 2 reduced [2Fe-2S]-[ferredoxin] + 2 S-adenosyl-L-methionine = 2-methyladenosine(37) in tRNA + 5'-deoxyadenosine + L-methionine + 2 oxidized [2Fe-2S]-[ferredoxin] + S-adenosyl-L-homocysteine. Specifically methylates position 2 of adenine 2503 in 23S rRNA and position 2 of adenine 37 in tRNAs. m2A2503 modification seems to play a crucial role in the proofreading step occurring at the peptidyl transferase center and thus would serve to optimize ribosomal fidelity. The polypeptide is Dual-specificity RNA methyltransferase RlmN (Klebsiella pneumoniae (strain 342)).